We begin with the raw amino-acid sequence, 278 residues long: Nucleotide-binding protein Tmel_1373 (278 aa).

Residue 10–17 (GLSGAGKS) coordinates ATP. 58 to 61 (DSRS) is a binding site for GTP.

This sequence belongs to the RapZ-like family.

Its function is as follows. Displays ATPase and GTPase activities. In Thermosipho melanesiensis (strain DSM 12029 / CIP 104789 / BI429), this protein is Nucleotide-binding protein Tmel_1373.